Consider the following 179-residue polypeptide: Bifunctional protein PyrR (179 aa).

Positions 99–111 match the PRPP-binding motif; that stretch reads VILVDDVLYTGRT.

It belongs to the purine/pyrimidine phosphoribosyltransferase family. PyrR subfamily. In terms of assembly, homodimer and homohexamer; in equilibrium.

It carries out the reaction UMP + diphosphate = 5-phospho-alpha-D-ribose 1-diphosphate + uracil. In terms of biological role, regulates transcriptional attenuation of the pyrimidine nucleotide (pyr) operon by binding in a uridine-dependent manner to specific sites on pyr mRNA. This disrupts an antiterminator hairpin in the RNA and favors formation of a downstream transcription terminator, leading to a reduced expression of downstream genes. Its function is as follows. Also displays a weak uracil phosphoribosyltransferase activity which is not physiologically significant. The polypeptide is Bifunctional protein PyrR (Brevibacillus brevis (strain 47 / JCM 6285 / NBRC 100599)).